The following is a 327-amino-acid chain: Ketol-acid reductoisomerase (NADP(+)) (327 aa).

In terms of domain architecture, KARI N-terminal Rossmann spans 2–182; sequence AKIYTDKDAS…GATRAGVIET (181 aa). Residues 25 to 28, arginine 48, serine 53, and 83 to 86 each bind NADP(+); these read YGIQ and DMEQ. Histidine 108 is a catalytic residue. Glycine 134 provides a ligand contact to NADP(+). Residues 183 to 327 form the KARI C-terminal knotted domain; it reads TFAEETETDL…GAEMRKLLFG (145 aa). Mg(2+)-binding residues include aspartate 191, glutamate 195, glutamate 227, and glutamate 231. Residue serine 252 participates in substrate binding.

Belongs to the ketol-acid reductoisomerase family. Mg(2+) is required as a cofactor.

The enzyme catalyses (2R)-2,3-dihydroxy-3-methylbutanoate + NADP(+) = (2S)-2-acetolactate + NADPH + H(+). It carries out the reaction (2R,3R)-2,3-dihydroxy-3-methylpentanoate + NADP(+) = (S)-2-ethyl-2-hydroxy-3-oxobutanoate + NADPH + H(+). The protein operates within amino-acid biosynthesis; L-isoleucine biosynthesis; L-isoleucine from 2-oxobutanoate: step 2/4. Its pathway is amino-acid biosynthesis; L-valine biosynthesis; L-valine from pyruvate: step 2/4. In terms of biological role, involved in the biosynthesis of branched-chain amino acids (BCAA). Catalyzes an alkyl-migration followed by a ketol-acid reduction of (S)-2-acetolactate (S2AL) to yield (R)-2,3-dihydroxy-isovalerate. In the isomerase reaction, S2AL is rearranged via a Mg-dependent methyl migration to produce 3-hydroxy-3-methyl-2-ketobutyrate (HMKB). In the reductase reaction, this 2-ketoacid undergoes a metal-dependent reduction by NADPH to yield (R)-2,3-dihydroxy-isovalerate. The sequence is that of Ketol-acid reductoisomerase (NADP(+)) from Pyrobaculum neutrophilum (strain DSM 2338 / JCM 9278 / NBRC 100436 / V24Sta) (Thermoproteus neutrophilus).